A 277-amino-acid chain; its full sequence is Large ribosomal subunit protein uL2 (277 aa).

Disordered stretches follow at residues 34–55 and 213–277; these read LQPL…RHHG and WKGI…RKKK.

It belongs to the universal ribosomal protein uL2 family. Part of the 50S ribosomal subunit. Forms a bridge to the 30S subunit in the 70S ribosome.

Functionally, one of the primary rRNA binding proteins. Required for association of the 30S and 50S subunits to form the 70S ribosome, for tRNA binding and peptide bond formation. It has been suggested to have peptidyltransferase activity; this is somewhat controversial. Makes several contacts with the 16S rRNA in the 70S ribosome. This is Large ribosomal subunit protein uL2 from Staphylococcus haemolyticus (strain JCSC1435).